The sequence spans 147 residues: Deoxyuridine 5'-triphosphate nucleotidohydrolase (147 aa).

DUMP contacts are provided by Ser-69, Gly-82, Asp-85, Tyr-88, Lys-93, Arg-137, Phe-142, and Gly-143.

This sequence belongs to the dUTPase family. As to quaternary structure, homotrimer. Mg(2+) serves as cofactor.

The catalysed reaction is dUTP + H2O = dUMP + diphosphate + H(+). It participates in pyrimidine metabolism; dUMP biosynthesis; dUMP from dCTP (dUTP route): step 2/2. In terms of biological role, involved in nucleotide metabolism via production of dUMP, the immediate precursor of thymidine nucleotides, and decreases the intracellular concentration of dUTP so that uracil cannot be incorporated into DNA. Shows a significant activity against dITP, another potentially mutagenic nucleotide. This is Deoxyuridine 5'-triphosphate nucleotidohydrolase from Saccharomyces cerevisiae (strain ATCC 204508 / S288c) (Baker's yeast).